The sequence spans 341 residues: Phosphate acyltransferase (341 aa).

This sequence belongs to the PlsX family. As to quaternary structure, homodimer. Probably interacts with PlsY.

Its subcellular location is the cytoplasm. It carries out the reaction a fatty acyl-[ACP] + phosphate = an acyl phosphate + holo-[ACP]. Its pathway is lipid metabolism; phospholipid metabolism. Catalyzes the reversible formation of acyl-phosphate (acyl-PO(4)) from acyl-[acyl-carrier-protein] (acyl-ACP). This enzyme utilizes acyl-ACP as fatty acyl donor, but not acyl-CoA. This Vibrio vulnificus (strain CMCP6) protein is Phosphate acyltransferase.